A 265-amino-acid chain; its full sequence is Thiazole synthase (265 aa).

The active-site Schiff-base intermediate with DXP is the K103. Residues G164, 190-191 (AG), and 212-213 (NT) contribute to the 1-deoxy-D-xylulose 5-phosphate site.

Belongs to the ThiG family. In terms of assembly, homotetramer. Forms heterodimers with either ThiH or ThiS.

The protein resides in the cytoplasm. It carries out the reaction [ThiS sulfur-carrier protein]-C-terminal-Gly-aminoethanethioate + 2-iminoacetate + 1-deoxy-D-xylulose 5-phosphate = [ThiS sulfur-carrier protein]-C-terminal Gly-Gly + 2-[(2R,5Z)-2-carboxy-4-methylthiazol-5(2H)-ylidene]ethyl phosphate + 2 H2O + H(+). The protein operates within cofactor biosynthesis; thiamine diphosphate biosynthesis. In terms of biological role, catalyzes the rearrangement of 1-deoxy-D-xylulose 5-phosphate (DXP) to produce the thiazole phosphate moiety of thiamine. Sulfur is provided by the thiocarboxylate moiety of the carrier protein ThiS. In vitro, sulfur can be provided by H(2)S. This chain is Thiazole synthase, found in Bordetella bronchiseptica (strain ATCC BAA-588 / NCTC 13252 / RB50) (Alcaligenes bronchisepticus).